Here is a 459-residue protein sequence, read N- to C-terminus: Endoglucanase EG-1 (459 aa).

An N-terminal signal peptide occupies residues 1–22; it reads MAPSVTLPLTTAILAIARLVAA. Residue Gln-23 is modified to Pyrrolidone carboxylic acid. Residues 23 to 397 are catalytic; it reads QQPGTSTPEV…DIGSTTNSTA (375 aa). 8 disulfides stabilise this stretch: Cys-41–Cys-47, Cys-71–Cys-92, Cys-82–Cys-88, Cys-161–Cys-360, Cys-193–Cys-216, Cys-197–Cys-215, Cys-236–Cys-241, and Cys-246–Cys-315. An N-linked (GlcNAc) asparagine glycan is attached at Asn-78. A glycan (N-linked (GlcNAc...) (high mannose) asparagine) is linked at Asn-204. Glu-218 (nucleophile) is an active-site residue. Glu-223 serves as the catalytic Proton donor/acceptor. The tract at residues 390–425 is disordered; sequence GSTTNSTAPPPPPASSTTFSTTRRSSTTSSSPSCTQ. Asn-394 carries N-linked (GlcNAc...) asparagine glycosylation. Positions 398–423 are linker; that stretch reads PPPPPASSTTFSTTRRSSTTSSSPSC. Residues 404 to 425 show a composition bias toward low complexity; sequence SSTTFSTTRRSSTTSSSPSCTQ. Cystine bridges form between Cys-423-Cys-439, Cys-431-Cys-448, and Cys-442-Cys-458. The region spanning 423 to 459 is the CBM1 domain; that stretch reads CTQTHWGQCGGIGYSGCKTCTSGTTCQYSNDYYSQCL.

This sequence belongs to the glycosyl hydrolase 7 (cellulase C) family. Asn-204 contains mainly a high-mannose-type glycan (Hex(7-9)GlcNAc(2)), with a small fraction (8%) bearing a single GlcNAc at this site.

The protein resides in the secreted. It catalyses the reaction Endohydrolysis of (1-&gt;4)-beta-D-glucosidic linkages in cellulose, lichenin and cereal beta-D-glucans.. Endoglucanase (EG) that cleaves the internal beta-1,4-glucosidic bonds in cellulose. The degradation of cellulose involves an interplay between different cellulolytic enzymes. Hydrolysis starts with EGs, which cut internal glycosidic linkages to reduce the polymerization degree of the substrate and creates new chain ends for exocellobiohydrolases (CBHs). The CBH release the disaccharide cellobiose from the non-reducing end of the cellulose polymer chain. Finally, beta-1,4-glucosidases hydrolyze the cellobiose and other short cello-oligosaccharides into glucose units. The protein is Endoglucanase EG-1 (egl1) of Hypocrea jecorina (Trichoderma reesei).